The sequence spans 496 residues: Solute carrier family 2, facilitated glucose transporter member 3 (496 aa).

Topologically, residues 1-10 are cytoplasmic; sequence MGTQKVTPAL. The helical transmembrane segment at 11–32 threads the bilayer; that stretch reads IFAITVATIGSFQFGYNTGVIN. Residues 33–64 lie on the Extracellular side of the membrane; sequence APEKIIKEFINKTLTDKGNAPPSEVLLTSLWS. A glycan (N-linked (GlcNAc...) asparagine) is linked at Asn-43. A helical membrane pass occupies residues 65 to 85; the sequence is LSVAIFSVGGMIGSFSVGLFV. The Cytoplasmic segment spans residues 86-90; that stretch reads NRFGR. A helical transmembrane segment spans residues 91–111; it reads RNSMLIVNLLAVTGGCFMGLC. Residues 112 to 118 lie on the Extracellular side of the membrane; the sequence is KVAKSVE. A helical transmembrane segment spans residues 119–142; sequence MLILGRLVIGLFCGLCTGFVPMYI. Residues 143-153 are Cytoplasmic-facing; it reads GEISPTALRGA. Residues 154–174 form a helical membrane-spanning segment; sequence FGTLNQLGIVVGILVAQIFGL. D-glucose is bound at residue Gln-159. Residues 175-183 are Extracellular-facing; it reads EFILGSEEL. The chain crosses the membrane as a helical span at residues 184–204; sequence WPLLLGFTILPAILQSAALPF. Over 205-269 the chain is Cytoplasmic; the sequence is CPESPRFLLI…LFRVSSYRQP (65 aa). At Thr-232 the chain carries Phosphothreonine. The helical transmembrane segment at 270-290 threads the bilayer; the sequence is IIISIVLQLSQQLSGINAVFY. Residues 277–279 are important for selectivity against fructose; sequence QLS. Residues 280 to 281 and Asn-286 contribute to the D-glucose site; that span reads QQ. Over 291–304 the chain is Extracellular; the sequence is YSTGIFKDAGVQEP. A helical transmembrane segment spans residues 305-325; that stretch reads IYATIGAGVVNTIFTVVSLFL. A D-glucose-binding site is contributed by Asn-315. Topologically, residues 326–331 are cytoplasmic; it reads VERAGR. The helical transmembrane segment at 332–352 threads the bilayer; it reads RTLHMIGLGGMAFCSTLMTVS. Topologically, residues 353–363 are extracellular; sequence LLLKDNYNGMS. Residues 364–389 form a helical membrane-spanning segment; the sequence is FVCIGAILVFVAFFEIGPGPIPWFIV. Positions 378 and 386 each coordinate D-glucose. Residues 390–399 are Cytoplasmic-facing; the sequence is AELFSQGPRP. Residues 400-420 traverse the membrane as a helical segment; sequence AAMAVAGCSNWTSNFLVGLLF. Residues 421–429 lie on the Extracellular side of the membrane; the sequence is PSAAHYLGA. The chain crosses the membrane as a helical span at residues 430 to 450; the sequence is YVFIIFTGFLITFLAFTFFKV. Over 451 to 496 the chain is Cytoplasmic; that stretch reads PETRGRTFEDITRAFEGQAHGADRSGKDGVMEMNSIEPAKETTTNV. Phosphoserine is present on residues Ser-475 and Ser-485. Residue Thr-492 is modified to Phosphothreonine.

This sequence belongs to the major facilitator superfamily. Sugar transporter (TC 2.A.1.1) family. Glucose transporter subfamily. Interacts with SMIM43; the interaction may promote SLC2A3-mediated glucose transport to meet the energy needs of mesendoderm differentiation. As to expression, highly expressed in brain. Expressed in many tissues.

It is found in the cell membrane. It localises to the perikaryon. The protein localises to the cell projection. It catalyses the reaction D-glucose(out) = D-glucose(in). The catalysed reaction is D-galactose(in) = D-galactose(out). With respect to regulation, deoxyglucose transport is inhibited by D-glucose, D-galactose and maltose. Galactose transport is inhibited by D-glucose and maltose. Its function is as follows. Facilitative glucose transporter. Can also mediate the uptake of various other monosaccharides across the cell membrane. Mediates the uptake of glucose, 2-deoxyglucose, galactose, mannose, xylose and fucose, and probably also dehydroascorbate. Does not mediate fructose transport. Required for mesendoderm differentiation. The protein is Solute carrier family 2, facilitated glucose transporter member 3 of Homo sapiens (Human).